A 236-amino-acid polypeptide reads, in one-letter code: Sugar fermentation stimulation protein homolog (236 aa).

The protein belongs to the SfsA family.

The sequence is that of Sugar fermentation stimulation protein homolog from Gloeobacter violaceus (strain ATCC 29082 / PCC 7421).